A 504-amino-acid chain; its full sequence is D-alanine--D-alanyl carrier protein ligase (504 aa).

Residue 152 to 153 (TS) coordinates ATP. Asp197 serves as a coordination point for D-alanine. 292–297 (NTYGPT) provides a ligand contact to ATP. Residue Val301 participates in D-alanine binding. ATP-binding positions include Asp383, 394–397 (YNGR), and Lys492. Residue Lys492 coordinates D-alanine.

It belongs to the ATP-dependent AMP-binding enzyme family. DltA subfamily.

Its subcellular location is the cytoplasm. It catalyses the reaction holo-[D-alanyl-carrier protein] + D-alanine + ATP = D-alanyl-[D-alanyl-carrier protein] + AMP + diphosphate. Its pathway is cell wall biogenesis; lipoteichoic acid biosynthesis. Its function is as follows. Catalyzes the first step in the D-alanylation of lipoteichoic acid (LTA), the activation of D-alanine and its transfer onto the D-alanyl carrier protein (Dcp) DltC. In an ATP-dependent two-step reaction, forms a high energy D-alanyl-AMP intermediate, followed by transfer of the D-alanyl residue as a thiol ester to the phosphopantheinyl prosthetic group of the Dcp. D-alanylation of LTA plays an important role in modulating the properties of the cell wall in Gram-positive bacteria, influencing the net charge of the cell wall. The sequence is that of D-alanine--D-alanyl carrier protein ligase from Bacillus cereus (strain Q1).